The sequence spans 523 residues: Sodium-dependent lysophosphatidylcholine symporter 1-B (523 aa).

Over 1 to 34 (MAKGEGAEQYTNTSLLQKPSPDEVKLAKHETKSR) the chain is Cytoplasmic. A helical membrane pass occupies residues 35-64 (LSVCSKLCYAIGGAPYQITGCAIGFFLQIY). The Extracellular segment spans residues 65 to 75 (LLDVALLDPFY). Residues 76 to 96 (ASIILFVGRAWDAVTDPTVGF) traverse the membrane as a helical segment. Topologically, residues 97–108 (LVSRTPWTRFGR) are cytoplasmic. The chain crosses the membrane as a helical span at residues 109-128 (MMPWIVLSTPFAVLCYFLIW). Residues 129-138 (YVPSVDQGKV) lie on the Extracellular side of the membrane. A helical transmembrane segment spans residues 139–163 (VWYLIFYCCFQTLQTCFHVPYSALT). Over 164–170 (MFISTEQ) the chain is Cytoplasmic. Residues 171 to 202 (KERDSATAYRMTVEVLGTLIGTAIQGQIVGMA) traverse the membrane as a helical segment. The Extracellular segment spans residues 203–226 (NAPCISTEIDLNSTGLEVAPDVNI). Cysteine 206 and cysteine 457 are joined by a disulfide. Residues asparagine 214 and asparagine 225 are each glycosylated (N-linked (GlcNAc...) asparagine). The helical transmembrane segment at 227–260 (TDPHVSLQDLRNAYMIASGVICAIYVVCAVVLFL) threads the bilayer. Over 261–290 (GVKEQKDTCRVRTEPMSFFQGICMVMGHGP) the chain is Cytoplasmic. Residues 291-317 (YAKLVMGFLFTSLAFMLLEGNFALFCI) form a helical membrane-spanning segment. The Extracellular segment spans residues 318–328 (YNLGFRNDFQN). Residues 329–347 (VLLVIMLSATLAIPFWQWF) traverse the membrane as a helical segment. At 348–351 (LTKF) the chain is on the cytoplasmic side. The helical transmembrane segment at 352–373 (GKKTAVYIGTTSVVPFLISVVL) threads the bilayer. Topologically, residues 374–376 (VPS) are extracellular. Residues 377-413 (SLAVTYIASFAAGVSVAAAFLLPWSMLPDVVDDFKVQ) form a helical membrane-spanning segment. Topologically, residues 414 to 423 (NPESQGHEAI) are cytoplasmic. A helical membrane pass occupies residues 424 to 450 (FYSFYVFFTKFASGVSLGVSTLSLDFA). Residues 451–462 (GYVTRGCTQPGE) are Extracellular-facing. Residues 463-486 (VKLTLKILVSAAPIVLIIIGLLIF) traverse the membrane as a helical segment. At 487 to 523 (ISYPINEEKRQGNRKLLNEQRENEMDSETDSTELNVV) the chain is on the cytoplasmic side. The tract at residues 504 to 523 (NEQRENEMDSETDSTELNVV) is disordered.

It belongs to the major facilitator superfamily. Expressed in the developing nervous system.

Its subcellular location is the cell membrane. It localises to the endoplasmic reticulum membrane. It catalyses the reaction a 1-acyl-sn-glycero-3-phosphocholine(in) + Na(+)(in) = a 1-acyl-sn-glycero-3-phosphocholine(out) + Na(+)(out). The enzyme catalyses 1-(4Z,7Z,10Z,13Z,16Z,19Z-docosahexaenoyl)-sn-glycero-3-phosphocholine(in) + Na(+)(in) = 1-(4Z,7Z,10Z,13Z,16Z,19Z-docosahexaenoyl)-sn-glycero-3-phosphocholine(out) + Na(+)(out). The catalysed reaction is 1-(9Z-octadecenoyl)-sn-glycero-3-phosphocholine(in) + Na(+)(in) = 1-(9Z-octadecenoyl)-sn-glycero-3-phosphocholine(out) + Na(+)(out). It carries out the reaction 1-hexadecanoyl-sn-glycero-3-phosphocholine(in) + Na(+)(in) = 1-hexadecanoyl-sn-glycero-3-phosphocholine(out) + Na(+)(out). It catalyses the reaction a 1-acyl-sn-glycero-3-phosphoethanolamine(in) + Na(+)(in) = a 1-acyl-sn-glycero-3-phosphoethanolamine(out) + Na(+)(out). Functionally, sodium-dependent lysophosphatidylcholine (LPC) symporter, which plays an essential role for blood-brain barrier formation and function. Specifically expressed in endothelium of the blood-brain barrier of micro-vessels and transports LPC into the brain. Transport of LPC is essential because it constitutes the major mechanism by which docosahexaenoic acid (DHA), an omega-3 fatty acid that is essential for normal brain growth and cognitive function, enters the brain. Transports LPC carrying long-chain fatty acids such LPC oleate and LPC palmitate with a minimum acyl chain length of 14 carbons. Does not transport docosahexaenoic acid in unesterified fatty acid. The chain is Sodium-dependent lysophosphatidylcholine symporter 1-B (mfsd2ab) from Danio rerio (Zebrafish).